A 1215-amino-acid chain; its full sequence is Zinc finger SWIM domain-containing protein 6 (1215 aa).

Disordered stretches follow at residues 1–46 and 133–161; these read MAER…RPGP and AAGG…SPAA. Gly residues-rich tracts occupy residues 18 to 38 and 133 to 155; these read PGGG…GGGY and AAGG…GGGS. The SWIM-type zinc-finger motif lies at 246–283; that stretch reads CNVAISFDRCKITSVTCSCGNKDIFYCAHVVALSLYRI.

Involved in nervous system development, important for striatal morphology and motor regulation. The polypeptide is Zinc finger SWIM domain-containing protein 6 (Homo sapiens (Human)).